A 273-amino-acid polypeptide reads, in one-letter code: Transposon Tn7 transposition protein TnsA (273 aa).

Catalysis depends on residues Glu-63 and Glu-73. Residues Thr-90–Asp-108 constitute a DNA-binding region (H-T-H motif). Residue Asp-114 is part of the active site. Residues Asp-114, Gln-130, and Val-131 each coordinate Mg(2+). Residue Lys-132 is part of the active site.

Heteromer with TnsB. Interacts with TnsC (via C-terminus); this interaction allows TnsA to bind donor DNA. The cofactor is Mg(2+). Mn(2+) is required as a cofactor.

Functionally, required for Tn7 transposition. Forms the transposase, together with TnsB. TnsA executes the 5'-DNA strand breakage reaction. TnsABC and TnsD promote high-frequency insertion of Tn7 into a specific target site known as att-Tn7 whereas TnsABC and TnsE promote low-frequency insertion into many different sites. The chain is Transposon Tn7 transposition protein TnsA from Escherichia coli.